The primary structure comprises 545 residues: MGDWRTISLPESDKILQYSSEIRMSPTSLLSSPSHSAANTLSGIVYNFCTEDNIEQCITYIDQELRTIGFPTVQAVSKNGDGRKLHLVSIVNCIHELLQRNSQNMRSKEEVETQLLKINGDLEHLQSIYQRQKDQMEATRRENCALQERDRQMQCKNRNLLQLLKNEKEEVQKLQNIIASRSTQFNHSVKRKEREYNKLKERLYQLVMDKRDKKISIDVLNYVGRADGKRTSWRTGKTDAKNEEEMYKVLLNDYEQRQKQLMVENAELKKVLQQMKKEMISILSQRKTKEKLDDSIGPVASDIEEDLADSSKENLSELSCEAVREQLVSSIRQQWRILKSHMEKLDNQATPDENGMIARGDHEQELGKLINEIQQCKETIKIQQQLLKQQFSVPRDDTSTLLQDCYLLEDKERLQEEWKLFNEQKKNFEKERRNFTEAAIRLGHEKKAFEEDRAAWLKHQFLNMTVFTDHKNSEEKRAHGVHFSPEQDHCRLHSRTHDRHLASSGDHYQRPRKTLPITPSSKHSLTQRESVAWRDSSISPNGTDF.

2 coiled-coil regions span residues arginine 106–lysine 287 and alanine 358–leucine 442. The segment at histidine 497 to phenylalanine 545 is disordered. 2 stretches are compositionally biased toward polar residues: residues isoleucine 517 to glutamate 529 and serine 536 to phenylalanine 545.

This sequence belongs to the ADIP family. In terms of assembly, interacts with WRAP73.

It is found in the cell junction. It localises to the adherens junction. The protein localises to the cytoplasm. Its subcellular location is the cytoskeleton. The protein resides in the microtubule organizing center. It is found in the centrosome. It localises to the centriolar satellite. In terms of biological role, belongs to an adhesion system, which plays a role in the organization of homotypic, interneuronal and heterotypic cell-cell adherens junctions (AJs). Involved in cell movement. Acts as a centrosome maturation factor, probably by maintaining the integrity of the pericentriolar material and proper microtubule nucleation at mitotic spindle poles. The function seems to implicate at least in part WRAP73; the SSX2IP:WRAP73 complex is proposed to act as regulator of spindle anchoring at the mitotic centrosome. This Xenopus laevis (African clawed frog) protein is Afadin- and alpha-actinin-binding protein B (ssx2ip-b).